Here is a 575-residue protein sequence, read N- to C-terminus: MAFEGVLQIVATLVLMVAIVPFFGTYMARVFQGESTWLDRVLGPIENLVYRLGGVRPELTMDWWSYARAVLASNAAMFVPVFAVLLLQGSLPLNPNGISGMSWDLALHTAISFLTNTNQQHYSGETGASHLAQMVCFQFLMFTSAATGLAVGIAFIRGLLGKPLGNFYVDLTRSVSRILMPISIAFAVVLLSQGVPQSLGGTTEAQLVDPYRTEQDGKREQVTAQKLVSGPFASMESIKELGENGGGSYGINSAHPYENPNPFTNLLEILLLLAVPTSLIYTFGVLANNKKQGWVLFGTIFVLFVGLVGVAALGEYWGNPTVNALLGSANPNFEGQEVRFGWAQSALFATATTGTMTGAVNAMHDSLTPLAGLVTLFNLCLQVIWGGQGTGIAYILVFLIIAVFLTGLMVGRTPEIFGRKLEKREVALASIIFLVHPVIILVPTAIALAIPGLAGNSNPGFHGLTQVVYEYASAAANNGSGFEGLGDATPWWNLSTSVVLLLGRYAPIVALLALAGGLQRKQPVPETPGTLRTDTVLFGSVTAGTILILGALTFFPVFALGPIAEWIANLAGKTL.

The next 12 membrane-spanning stretches (helical) occupy residues 3–23 (FEGVLQIVATLVLMVAIVPFF), 69–89 (AVLASNAAMFVPVFAVLLLQG), 136–156 (CFQFLMFTSAATGLAVGIAFI), 178–198 (ILMPISIAFAVVLLSQGVPQS), 266–286 (LLEILLLLAVPTSLIYTFGVL), 293–313 (GWVLFGTIFVLFVGLVGVAAL), 340–360 (FGWAQSALFATATTGTMTGAV), 367–387 (LTPLAGLVTLFNLCLQVIWGG), 391–411 (GIAYILVFLIIAVFLTGLMVG), 431–451 (IIFLVHPVIILVPTAIALAIP), 498–518 (VVLLLGRYAPIVALLALAGGL), and 543–563 (AGTILILGALTFFPVFALGPI).

It belongs to the KdpA family. The system is composed of three essential subunits: KdpA, KdpB and KdpC.

Its subcellular location is the cell inner membrane. Part of the high-affinity ATP-driven potassium transport (or Kdp) system, which catalyzes the hydrolysis of ATP coupled with the electrogenic transport of potassium into the cytoplasm. This subunit binds the periplasmic potassium ions and delivers the ions to the membrane domain of KdpB through an intramembrane tunnel. The polypeptide is Potassium-transporting ATPase potassium-binding subunit (Gloeobacter violaceus (strain ATCC 29082 / PCC 7421)).